Here is a 603-residue protein sequence, read N- to C-terminus: Polypeptide N-acetylgalactosaminyltransferase 9 (603 aa).

Topologically, residues 1–6 (MAVARK) are cytoplasmic. Residues 7-29 (IRTLLTVNILVFVGIVLFSVYCR) form a helical; Signal-anchor for type II membrane protein membrane-spanning segment. Residues 30-603 (LQGRSQELVR…IRNWIKHARH (574 aa)) lie on the Lumenal side of the membrane. Disulfide bonds link Cys141-Cys372 and Cys363-Cys442. Residues 150–261 (LPQVSVVFIF…TGWAEPALSR (112 aa)) are catalytic subdomain A. Substrate-binding residues include Asp191 and Arg222. 3 residues coordinate Mn(2+): Asp245, His247, and His377. Positions 318–380 (PIRTPAMIGC…PCSRVAHIER (63 aa)) are catalytic subdomain B. 2 residues coordinate substrate: Arg380 and Tyr385. N-linked (GlcNAc...) asparagine glycosylation occurs at Asn460. Residues 464–600 (TYGEVRNSKA…KWMIRNWIKH (137 aa)) form the Ricin B-type lectin domain. Intrachain disulfides connect Cys477-Cys493, Cys525-Cys540, and Cys567-Cys587.

This sequence belongs to the glycosyltransferase 2 family. GalNAc-T subfamily. Mn(2+) is required as a cofactor. Specifically expressed in brain. Not expressed in heart, placenta, lung, liver, skeletal muscle, kidney, pancreas, spleen, thymus, prostate, testis, ovary, small intestine, colon and leukocyte. In brain, it is expressed in cerebellum, frontal lobe, temporal lobe, putamen and spinal cord, weakly expressed in cerebral cortex. Not expressed in medulla and occipital pole.

The protein resides in the golgi apparatus membrane. It carries out the reaction L-seryl-[protein] + UDP-N-acetyl-alpha-D-galactosamine = a 3-O-[N-acetyl-alpha-D-galactosaminyl]-L-seryl-[protein] + UDP + H(+). The enzyme catalyses L-threonyl-[protein] + UDP-N-acetyl-alpha-D-galactosamine = a 3-O-[N-acetyl-alpha-D-galactosaminyl]-L-threonyl-[protein] + UDP + H(+). The protein operates within protein modification; protein glycosylation. Functionally, catalyzes the initial reaction in O-linked oligosaccharide biosynthesis, the transfer of an N-acetyl-D-galactosamine residue to a serine or threonine residue on the protein receptor. Does not glycosylate apomucin or SDC3. In Homo sapiens (Human), this protein is Polypeptide N-acetylgalactosaminyltransferase 9 (GALNT9).